The chain runs to 2997 residues: Chromodomain-helicase-DNA-binding protein 7 (2997 aa).

Residues 86–144 (PNRMMSNTPGNGLASPHSQYHTPPVPQVPHGGSGGGQMGVYPGMQNERHGQSFVDSSSM) form a disordered region. The segment covering 88–106 (RMMSNTPGNGLASPHSQYH) has biased composition (polar residues). Arginine 148 carries the omega-N-methylarginine modification. Disordered regions lie at residues 160–186 (YQQQQPQPQPPQPAPSGPPAQGHPQHM), 199–287 (SMQQ…AVRP), 375–419 (QMNT…GSAG), 498–816 (GQQH…KQKE), and 938–959 (REPETERVERPPADDWKKSESS). Positions 166-177 (QPQPPQPAPSGP) are enriched in pro residues. 2 stretches are compositionally biased toward polar residues: residues 199-224 (SMQQHGQPQQRMSQFSQGQEGLNQGN) and 238-255 (VPQQSPSMAPSLRHSVQQ). Residue arginine 286 is modified to Asymmetric dimethylarginine. Polar residues predominate over residues 375–390 (QMNTQTMHPSQPQGTY). Residues 498 to 510 (GQQHPGQQPSFQQ) show a composition bias toward low complexity. Over residues 607 to 620 (VAEDPSKGFGKDDF) the composition is skewed to basic and acidic residues. Residues 627–636 (QELNRNSLDG) are compositionally biased toward polar residues. Serine 637 is modified (phosphoserine). 2 stretches are compositionally biased toward basic and acidic residues: residues 650–682 (KKDPKEPKEPKEKKEPKEPKTPKAPKIPKEPKE) and 717–729 (GKTEGSENSDLDK). Phosphoserine is present on serine 725. Positions 746 to 758 (QKRRSSRQVKRKR) are enriched in basic residues. Over residues 759–769 (YTEDLEFKISD) the composition is skewed to basic and acidic residues. Residues 782 to 794 (SPSNTSQSEQQES) show a composition bias toward polar residues. Chromo domains are found at residues 800–867 (PVVE…GQNK) and 882–947 (VEVD…RVER). One can recognise a Helicase ATP-binding domain in the interval 980–1154 (LFNWYNMRNC…FSLLHFLEPS (175 aa)). Residue 993–1000 (DEMGLGKT) participates in ATP binding. A DEAH box motif is present at residues 1105–1108 (DEAH). The 171-residue stretch at 1294–1464 (LIDKLLPKLK…LSKKEIEDLL (171 aa)) folds into the Helicase C-terminal domain. 2 disordered regions span residues 1576–1600 (FSDLESDSEEKPCAKPRRPQDKSQG) and 1837–1863 (DMLADGGDGGEFDREDEDPEYKPTRTP). A phosphoserine mark is found at serine 1577 and serine 1581. Positions 1584–1596 (EEKPCAKPRRPQD) are enriched in basic and acidic residues. Residues 1844–1855 (DGGEFDREDEDP) are compositionally biased toward acidic residues. Serine 1874 carries the phosphoserine modification. Basic and acidic residues-rich tracts occupy residues 2170–2189 (QAEGKVEEPENPAAKEKCEG) and 2198–2207 (GSGKESKQEC). Residues 2170 to 2290 (QAEGKVEEPE…DETRDGFYME (121 aa)) are disordered. Phosphoserine is present on residues serine 2231, serine 2233, serine 2237, serine 2251, serine 2272, serine 2275, serine 2356, and serine 2395. The span at 2237–2251 (SEEDEEEKLEDDDKS) shows a compositional bias: acidic residues. The stretch at 2401-2431 (RRRRRKIEIEAERAAKRRNLMEMVAQLRESQ) forms a coiled coil. Threonine 2472 carries the phosphothreonine modification. A phosphoserine mark is found at serine 2533 and serine 2535. The residue at position 2551 (threonine 2551) is a Phosphothreonine. Residues serine 2559 and serine 2619 each carry the phosphoserine modification. A compositionally biased stretch (low complexity) spans 2823–2832 (ATGNTTTASS). 2 disordered regions span residues 2823-2872 (ATGN…SANG) and 2935-2997 (EEKA…ENDE). Basic and acidic residues-rich tracts occupy residues 2839-2849 (STSKGEEKGNE) and 2935-2951 (EEKAADKAEGGPFKDGE). Phosphoserine is present on residues serine 2956 and serine 2961. The segment covering 2970 to 2997 (LLEDEIAQGEELDSLDGGDEIENNENDE) has biased composition (acidic residues).

Belongs to the SNF2/RAD54 helicase family. May interact with CTCF. Interacts with CHD8. Interacts with FAM124B. Found in a complex composed of AGO2, CHD7 and ARB2A. Interacts with TLK2. Widely expressed in fetal and adult tissues.

The protein localises to the nucleus. Its subcellular location is the nucleolus. It catalyses the reaction ATP + H2O = ADP + phosphate + H(+). Functionally, ATP-dependent chromatin-remodeling factor, slides nucleosomes along DNA; nucleosome sliding requires ATP. Probable transcription regulator. May be involved in the in 45S precursor rRNA production. The sequence is that of Chromodomain-helicase-DNA-binding protein 7 (CHD7) from Homo sapiens (Human).